A 172-amino-acid polypeptide reads, in one-letter code: Translation initiation factor IF-3 (172 aa).

This sequence belongs to the IF-3 family. In terms of assembly, monomer.

The protein localises to the cytoplasm. Functionally, IF-3 binds to the 30S ribosomal subunit and shifts the equilibrium between 70S ribosomes and their 50S and 30S subunits in favor of the free subunits, thus enhancing the availability of 30S subunits on which protein synthesis initiation begins. The polypeptide is Translation initiation factor IF-3 (Thermotoga maritima (strain ATCC 43589 / DSM 3109 / JCM 10099 / NBRC 100826 / MSB8)).